We begin with the raw amino-acid sequence, 423 residues long: MTKAYTIVIKLGSSSLVDESTKEPKLSIMTLIVETVTNLKRMGHKVIIVSSGGIAVGLDALNIPHKPKQLSEVQAIAAVGQGRLIARWNMLFSQYGEQTAQILLTRNDILRWNQYNNARNTINELLAMGVIPIVNENDTLSISEIEFGDNDTLSAITAALVGADFLFLLTDVDCLYTDNPRTNPDARPIVLVPELSEGLPGVNTSSGSGSEVGTGGMRTKLIAADLASNAGIETIVMKSDRPEYVPKIVDYIQHHFRPPRHIGNGTQQQFLDLQDTELEQLRRYDVPMHTKFLANDNKHKLKNREFWILHGLITKGAIIIDENSYDKLLSKDMASLTPNAVIEVRDNFHELECVDLKIGQRLPNGELDISKPIQSVGCVRSNYTSLELAKIKGLPSEKIHDVLGYSVSEYVAHRENIAFPPQF.

Substrate contacts are provided by S51, D138, and N150. ATP contacts are provided by residues 170 to 171 (TD) and 214 to 220 (TGGMRTK). In terms of domain architecture, PUA spans 315 to 406 (KGAIIIDENS…EKIHDVLGYS (92 aa)).

The protein belongs to the glutamate 5-kinase family.

The protein resides in the cytoplasm. This is an uncharacterized protein from Saccharomyces cerevisiae (strain ATCC 204508 / S288c) (Baker's yeast).